Here is a 314-residue protein sequence, read N- to C-terminus: Ribosomal protein uL3 glutamine methyltransferase (314 aa).

The protein belongs to the protein N5-glutamine methyltransferase family. PrmB subfamily.

The catalysed reaction is L-glutaminyl-[ribosomal protein uL3] + S-adenosyl-L-methionine = N(5)-methyl-L-glutaminyl-[ribosomal protein uL3] + S-adenosyl-L-homocysteine + H(+). In terms of biological role, methylates large ribosomal subunit protein uL3 on a specific glutamine residue. The chain is Ribosomal protein uL3 glutamine methyltransferase from Francisella tularensis subsp. tularensis (strain SCHU S4 / Schu 4).